A 134-amino-acid chain; its full sequence is Holo-[acyl-carrier-protein] synthase (134 aa).

The Mg(2+) site is built by Asp8 and Glu57.

This sequence belongs to the P-Pant transferase superfamily. AcpS family. Requires Mg(2+) as cofactor.

It is found in the cytoplasm. It catalyses the reaction apo-[ACP] + CoA = holo-[ACP] + adenosine 3',5'-bisphosphate + H(+). Functionally, transfers the 4'-phosphopantetheine moiety from coenzyme A to a Ser of acyl-carrier-protein. The sequence is that of Holo-[acyl-carrier-protein] synthase from Rhizobium etli (strain CIAT 652).